A 680-amino-acid polypeptide reads, in one-letter code: Viral IRF2-like protein (680 aa).

A DNA-binding region (IRF tryptophan pentad repeat) is located at residues 7–103 (SEWLTDFIID…RPFTIYKGKM (97 aa)). 4 disordered regions span residues 156–201 (SLRK…SENE), 220–257 (EEPEPSGFGSSGQSSSLLAPDSPRPSTSQVQGPLHVHT), 343–365 (ETASPQGPMQSEGGEEGSTESVS), and 403–423 (ASPQGPMQSEGGEEGSTESVS). A compositionally biased stretch (low complexity) spans 168-188 (KQAAAVATPTTSSAAEVSSRS). Positions 191–200 (EDTESSDSEN) are enriched in acidic residues. The segment covering 220–240 (EEPEPSGFGSSGQSSSLLAPD) has biased composition (low complexity).

Belongs to the IRF family. Interacts with host EIF2AK2/PKR. Interacts with host USP7.

It localises to the host nucleus. Its subcellular location is the host cytoplasm. DNA-binding transcription factor that plays a role in the modulation of host immune response. Acts by interacting with host EIF2AK2/PKR and inhibiting its activation. In turn, EIF2AK2/PKR substrates including EIF2S1 or histone H2A are not phosphorylated. Inhibits type I interferon signaling by targeting host IRF3 during viral reactivation from latency. Attenuates the transcriptional activity of host FOXO3 via activation of the AKT1 signaling pathway, inhibiting FOXO3-mediated apoptosis. Also suppresses the expression of viral early lytic genes in both newly infected and reactivated infected host cells allowing regulation of viral life cycle by harnessing the interferon pathway. Mechanistically, promotes host PML bodies formation as well as host antiviral restriction factors IFIT1-3 expression leading to inhibition of viral early lytic proteins. Also regulates host TRAF3 and TRAF6 ubiquitination by interacting with USP7 deubiquitinase thereby influencing TRAF3/6-mediated signal transduction. This chain is Viral IRF2-like protein (vIRF-2), found in Human herpesvirus 8 type P (isolate GK18) (HHV-8).